The following is a 394-amino-acid chain: tRNA-specific 2-thiouridylase MnmA (394 aa).

Residues 13–20 (GLSGGVDS) and Met-39 contribute to the ATP site. Positions 99–101 (NPD) are interaction with target base in tRNA. The Nucleophile role is filled by Cys-104. An intrachain disulfide couples Cys-104 to Cys-202. Gly-128 serves as a coordination point for ATP. The tract at residues 152 to 154 (KDQ) is interaction with tRNA. The Cysteine persulfide intermediate role is filled by Cys-202. The interaction with tRNA stretch occupies residues 329 to 330 (RY).

This sequence belongs to the MnmA/TRMU family.

The protein resides in the cytoplasm. It carries out the reaction S-sulfanyl-L-cysteinyl-[protein] + uridine(34) in tRNA + AH2 + ATP = 2-thiouridine(34) in tRNA + L-cysteinyl-[protein] + A + AMP + diphosphate + H(+). Its function is as follows. Catalyzes the 2-thiolation of uridine at the wobble position (U34) of tRNA, leading to the formation of s(2)U34. This chain is tRNA-specific 2-thiouridylase MnmA, found in Polaromonas naphthalenivorans (strain CJ2).